The chain runs to 224 residues: MKEKDYWEEAWLTSCTSIHDHHCDCGSWRDHLWTLCALDDADLAAAADIIEREEADGGEDFGFVDGDPGDAGGSAACTSLPPESKIPALLTRPILSEWSEQLHTPNTPGKAESRPKLEIKVSPLPLSVPSVQLHQIPTRSRRSSKPRKPRKKRKERVRPVSRVPKALLREMDRLMTKQRDALPESESSSYFSSDSLTDPWTTSDDDFQSDPDPLTNKRKKRLQF.

The segment at 128–224 (VPSVQLHQIP…TNKRKKRLQF (97 aa)) is disordered. Positions 129 to 138 (PSVQLHQIPT) are enriched in polar residues. Basic residues predominate over residues 139–156 (RSRRSSKPRKPRKKRKER). Residues 167–182 (LLREMDRLMTKQRDAL) are compositionally biased toward basic and acidic residues. Residues 185–195 (SESSSYFSSDS) show a composition bias toward low complexity.

This is an uncharacterized protein from Torque teno sus virus 1 (isolate Sd-TTV31).